A 537-amino-acid polypeptide reads, in one-letter code: Phosphoenolpyruvate carboxykinase (ATP) (537 aa).

Substrate-binding residues include Arg-61, Tyr-195, and Lys-201. Residues Lys-201, His-220, and 236-244 (GLSGTGKTT) contribute to the ATP site. Residues Lys-201 and His-220 each coordinate Mn(2+). Mn(2+) is bound at residue Asp-257. ATP contacts are provided by Glu-285, Arg-323, and Thr-448. Arg-323 serves as a coordination point for substrate.

It belongs to the phosphoenolpyruvate carboxykinase (ATP) family. Requires Mn(2+) as cofactor.

The protein localises to the cytoplasm. It carries out the reaction oxaloacetate + ATP = phosphoenolpyruvate + ADP + CO2. Its pathway is carbohydrate biosynthesis; gluconeogenesis. Involved in the gluconeogenesis. Catalyzes the conversion of oxaloacetate (OAA) to phosphoenolpyruvate (PEP) through direct phosphoryl transfer between the nucleoside triphosphate and OAA. In Rhodopseudomonas palustris (strain BisA53), this protein is Phosphoenolpyruvate carboxykinase (ATP).